Reading from the N-terminus, the 196-residue chain is Peptidyl-tRNA hydrolase (196 aa).

Y18 lines the tRNA pocket. The Proton acceptor role is filled by H23. 3 residues coordinate tRNA: F69, N71, and N117.

It belongs to the PTH family. As to quaternary structure, monomer.

The protein localises to the cytoplasm. It catalyses the reaction an N-acyl-L-alpha-aminoacyl-tRNA + H2O = an N-acyl-L-amino acid + a tRNA + H(+). Its function is as follows. Hydrolyzes ribosome-free peptidyl-tRNAs (with 1 or more amino acids incorporated), which drop off the ribosome during protein synthesis, or as a result of ribosome stalling. Functionally, catalyzes the release of premature peptidyl moieties from peptidyl-tRNA molecules trapped in stalled 50S ribosomal subunits, and thus maintains levels of free tRNAs and 50S ribosomes. In Aliivibrio salmonicida (strain LFI1238) (Vibrio salmonicida (strain LFI1238)), this protein is Peptidyl-tRNA hydrolase.